We begin with the raw amino-acid sequence, 141 residues long: Large ribosomal subunit protein uL11 (141 aa).

It belongs to the universal ribosomal protein uL11 family. Part of the ribosomal stalk of the 50S ribosomal subunit. Interacts with L10 and the large rRNA to form the base of the stalk. L10 forms an elongated spine to which L12 dimers bind in a sequential fashion forming a multimeric L10(L12)X complex. Post-translationally, one or more lysine residues are methylated.

In terms of biological role, forms part of the ribosomal stalk which helps the ribosome interact with GTP-bound translation factors. The protein is Large ribosomal subunit protein uL11 of Shouchella clausii (strain KSM-K16) (Alkalihalobacillus clausii).